The sequence spans 357 residues: MRPARALIDLQALRHNYRLARELTGAKALAVVKADAYGHGAVRCALALETEADGFAVACIEEALELRAAGIKAPVLLLEGFFEASELALIAEHDLWCVVHSLWQLEAIEQTPVRKPLTIWLKMDTGMHRVGVHPKDYQDAYQRLLASGKVSRIVLMSHFARADELDAAATEQQVAVFEAARQGLSAECSLRNSPAVLGWPSIKSDWVRPGIMLYGATPFEVAQAEAARLQPVMTLQSRIISVRELPAGEPVGYGAKFISPRPTRVGVVAMGYADGYPRQAPTGTPVVVAGKRTQLIGRVSMDMLCVDLTEVPEATVGSPVELWGKQVLASDVAMQAGTIPYQIFCNLKRVPLDCIGE.

Lysine 33 functions as the Proton acceptor; specific for D-alanine in the catalytic mechanism. Residue lysine 33 is modified to N6-(pyridoxal phosphate)lysine. Arginine 129 is a substrate binding site. Tyrosine 253 functions as the Proton acceptor; specific for L-alanine in the catalytic mechanism. A substrate-binding site is contributed by methionine 301.

This sequence belongs to the alanine racemase family. Pyridoxal 5'-phosphate is required as a cofactor.

The enzyme catalyses L-alanine = D-alanine. It participates in amino-acid biosynthesis; D-alanine biosynthesis; D-alanine from L-alanine: step 1/1. Catalyzes the interconversion of L-alanine and D-alanine. May also act on other amino acids. This is Alanine racemase (alr) from Pseudomonas entomophila (strain L48).